The sequence spans 21 residues: Fibrinogen beta chain (21 aa).

Q1 is modified (pyrrolidone carboxylic acid). The segment covering 1-11 (QPSYDYDEEED) has biased composition (acidic residues). The interval 1-21 (QPSYDYDEEEDDRAKLRLDAR) is disordered. Y6 is subject to Sulfotyrosine. Residues 12–21 (DRAKLRLDAR) show a composition bias toward basic and acidic residues.

As to quaternary structure, heterohexamer; disulfide linked. Contains 2 sets of 3 non-identical chains (alpha, beta and gamma). The 2 heterotrimers are in head to head conformation with the N-termini in a small central domain. Conversion of fibrinogen to fibrin is triggered by thrombin, which cleaves fibrinopeptides A and B from alpha and beta chains, and thus exposes the N-terminal polymerization sites responsible for the formation of the soft clot.

It localises to the secreted. Cleaved by the protease thrombin to yield monomers which, together with fibrinogen alpha (FGA) and fibrinogen gamma (FGG), polymerize to form an insoluble fibrin matrix. Fibrin has a major function in hemostasis as one of the primary components of blood clots. In addition, functions during the early stages of wound repair to stabilize the lesion and guide cell migration during re-epithelialization. Was originally thought to be essential for platelet aggregation, based on in vitro studies using anticoagulated blood. However subsequent studies have shown that it is not absolutely required for thrombus formation in vivo. Enhances expression of SELP in activated platelets. Maternal fibrinogen is essential for successful pregnancy. Fibrin deposition is also associated with infection, where it protects against IFNG-mediated hemorrhage. May also facilitate the antibacterial immune response via both innate and T-cell mediated pathways. The protein is Fibrinogen beta chain (FGB) of Antilocapra americana (Pronghorn).